Reading from the N-terminus, the 161-residue chain is Phosphopantetheine adenylyltransferase (161 aa).

S10 is a substrate binding site. ATP is bound by residues 10–11 (SF) and H18. Residues K42, L74, and R88 each contribute to the substrate site. ATP is bound by residues 88–89 (RG), E99, and 124–130 (YSFLSSS).

The protein belongs to the bacterial CoaD family. In terms of assembly, homohexamer. It depends on Mg(2+) as a cofactor.

Its subcellular location is the cytoplasm. It catalyses the reaction (R)-4'-phosphopantetheine + ATP + H(+) = 3'-dephospho-CoA + diphosphate. The protein operates within cofactor biosynthesis; coenzyme A biosynthesis; CoA from (R)-pantothenate: step 4/5. In terms of biological role, reversibly transfers an adenylyl group from ATP to 4'-phosphopantetheine, yielding dephospho-CoA (dPCoA) and pyrophosphate. This is Phosphopantetheine adenylyltransferase from Bacillus subtilis (strain 168).